The sequence spans 721 residues: Polyribonucleotide nucleotidyltransferase (721 aa).

D495 and D501 together coordinate Mg(2+). A KH domain is found at 562-621 (PRLLSFRIDPELIGTVIGPGGRTIKNITERTNTKIDIEDSGIVTIASHDGAAAEEAQKII). An S1 motif domain is found at 631–699 (GEVFTGSITR…NRGRINLTLR (69 aa)). Positions 700–721 (GVPQSGESADSQPAPTPVAPLS) are disordered.

Belongs to the polyribonucleotide nucleotidyltransferase family. Mg(2+) is required as a cofactor.

The protein resides in the cytoplasm. It carries out the reaction RNA(n+1) + phosphate = RNA(n) + a ribonucleoside 5'-diphosphate. Involved in mRNA degradation. Catalyzes the phosphorolysis of single-stranded polyribonucleotides processively in the 3'- to 5'-direction. This chain is Polyribonucleotide nucleotidyltransferase, found in Synechococcus sp. (strain CC9311).